Consider the following 470-residue polypeptide: Cytochrome P450 monooxygenase sirC (470 aa).

A helical transmembrane segment spans residues 12–34; sequence LRGMVVGTIMLLCYRYGLALSIL. An N-linked (GlcNAc...) asparagine glycan is attached at Asn-399. Cys-410 contributes to the heme binding site.

Belongs to the cytochrome P450 family. The cofactor is heme.

Its subcellular location is the membrane. It functions in the pathway mycotoxin biosynthesis. Its function is as follows. Cytochrome P450 monooxygenase; part of the gene cluster that mediates the biosynthesis of sirodesmin PL, an epipolythiodioxopiperazine (ETP) characterized by a disulfide bridged cyclic dipeptide and that acts as a phytotoxin which is involved in the blackleg didease of canola. SirD catalyzes the O-prenylation of L-tyrosine (L-Tyr) in the presence of dimethylallyl diphosphate (DMAPP) to yield 4-O-dimethylallyl-L-Tyr, and therefore represents probably the first pathway-specific enzyme in the biosynthesis of sirodesmin PL. 4-O-dimethylallyl-L-Tyr, then undergoes condensation with L-Ser in a reaction catalyzed by the non-ribosomal peptide synthase sirP to form the diketopiperazine (DKP) backbone. Further bishydroxylation of the DKP performed by the cytochrome P450 monooxygenase sirC leads to the production of the intermediate phomamide. This step is essential to form the reactive thiol group required for toxicity of sirodesmin PL. The next steps of sirodesmin biosynthesis are not well understood yet, but some predictions could be made from intermediate compounds identification. Phomamide is converted into phomalizarine via oxidation, probably by sirT. Further oxidation, methylation (by sirM or sirN) and reduction steps convert phomalizarine to deacetyl sirodesmin. Finally, acetyltransferase sirH probably acetylates deacetyl sirodesmin to produce sirodesmin PL. The chain is Cytochrome P450 monooxygenase sirC from Leptosphaeria maculans (Blackleg fungus).